Reading from the N-terminus, the 360-residue chain is Phosphoserine aminotransferase (360 aa).

R42 contacts L-glutamate. Pyridoxal 5'-phosphate contacts are provided by residues 76–77, W102, T152, D172, and Q195; that span reads AS. K196 carries the post-translational modification N6-(pyridoxal phosphate)lysine. Residue 237–238 coordinates pyridoxal 5'-phosphate; sequence NT.

The protein belongs to the class-V pyridoxal-phosphate-dependent aminotransferase family. SerC subfamily. As to quaternary structure, homodimer. Pyridoxal 5'-phosphate is required as a cofactor.

The protein localises to the cytoplasm. It catalyses the reaction O-phospho-L-serine + 2-oxoglutarate = 3-phosphooxypyruvate + L-glutamate. The catalysed reaction is 4-(phosphooxy)-L-threonine + 2-oxoglutarate = (R)-3-hydroxy-2-oxo-4-phosphooxybutanoate + L-glutamate. The protein operates within amino-acid biosynthesis; L-serine biosynthesis; L-serine from 3-phospho-D-glycerate: step 2/3. Catalyzes the reversible conversion of 3-phosphohydroxypyruvate to phosphoserine and of 3-hydroxy-2-oxo-4-phosphonooxybutanoate to phosphohydroxythreonine. The protein is Phosphoserine aminotransferase of Bacillus cereus (strain ZK / E33L).